We begin with the raw amino-acid sequence, 166 residues long: 6,7-dimethyl-8-ribityllumazine synthase (166 aa).

5-amino-6-(D-ribitylamino)uracil is bound by residues phenylalanine 24, 58–60, and 82–84; these read ALE and AVV. 87–88 is a binding site for (2S)-2-hydroxy-3-oxobutyl phosphate; the sequence is ET. Histidine 90 acts as the Proton donor in catalysis. Position 115 (asparagine 115) interacts with 5-amino-6-(D-ribitylamino)uracil. Arginine 129 lines the (2S)-2-hydroxy-3-oxobutyl phosphate pocket.

It belongs to the DMRL synthase family.

The enzyme catalyses (2S)-2-hydroxy-3-oxobutyl phosphate + 5-amino-6-(D-ribitylamino)uracil = 6,7-dimethyl-8-(1-D-ribityl)lumazine + phosphate + 2 H2O + H(+). It functions in the pathway cofactor biosynthesis; riboflavin biosynthesis; riboflavin from 2-hydroxy-3-oxobutyl phosphate and 5-amino-6-(D-ribitylamino)uracil: step 1/2. In terms of biological role, catalyzes the formation of 6,7-dimethyl-8-ribityllumazine by condensation of 5-amino-6-(D-ribitylamino)uracil with 3,4-dihydroxy-2-butanone 4-phosphate. This is the penultimate step in the biosynthesis of riboflavin. The protein is 6,7-dimethyl-8-ribityllumazine synthase of Cupriavidus necator (strain ATCC 17699 / DSM 428 / KCTC 22496 / NCIMB 10442 / H16 / Stanier 337) (Ralstonia eutropha).